Consider the following 166-residue polypeptide: Large ribosomal subunit protein bL19 (166 aa).

This sequence belongs to the bacterial ribosomal protein bL19 family.

In terms of biological role, this protein is located at the 30S-50S ribosomal subunit interface and may play a role in the structure and function of the aminoacyl-tRNA binding site. The polypeptide is Large ribosomal subunit protein bL19 (Chelativorans sp. (strain BNC1)).